Reading from the N-terminus, the 559-residue chain is 2,3-bisphosphoglycerate-independent phosphoglycerate mutase (559 aa).

Residues aspartate 28 and serine 81 each coordinate Mn(2+). Serine 81 serves as the catalytic Phosphoserine intermediate. Substrate-binding positions include histidine 140, arginine 170–aspartate 171, arginine 206, arginine 213, arginine 286–arginine 289, and lysine 361. Positions 430, 434, 471, 472, and 501 each coordinate Mn(2+).

This sequence belongs to the BPG-independent phosphoglycerate mutase family. As to quaternary structure, monomer. The cofactor is Mn(2+). In terms of processing, the N-terminus is blocked. In terms of tissue distribution, found ubiquitously in germinating seed.

It is found in the cytoplasm. The enzyme catalyses (2R)-2-phosphoglycerate = (2R)-3-phosphoglycerate. The protein operates within carbohydrate degradation; glycolysis; pyruvate from D-glyceraldehyde 3-phosphate: step 3/5. Catalyzes the interconversion of 2-phosphoglycerate and 3-phosphoglycerate. This chain is 2,3-bisphosphoglycerate-independent phosphoglycerate mutase, found in Zea mays (Maize).